The sequence spans 179 residues: Ubiquitin-conjugating enzyme E2 C (179 aa).

Residue Ala-2 is modified to N-acetylalanine. Ser-3 is subject to Phosphoserine. In terms of domain architecture, UBC core spans Pro-30–Ser-175. The Glycyl thioester intermediate role is filled by Cys-114.

The protein belongs to the ubiquitin-conjugating enzyme family. As to quaternary structure, component of the APC/C complex, composed of at least 14 distinct subunits that assemble into a complex of at least 19 chains with a combined molecular mass of around 1.2 MDa. Within this complex, directly interacts with ANAPC2. Post-translationally, autoubiquitinated by the APC/C complex, leading to its degradation by the proteasome. Its degradation plays a central role in APC/C regulation, allowing cyclin-A accumulation before S phase entry. APC/C substrates inhibit the autoubiquitination of UBE2C/UBCH10 but not its E2 function, hence APC/C remaining active until its substrates have been destroyed.

It carries out the reaction S-ubiquitinyl-[E1 ubiquitin-activating enzyme]-L-cysteine + [E2 ubiquitin-conjugating enzyme]-L-cysteine = [E1 ubiquitin-activating enzyme]-L-cysteine + S-ubiquitinyl-[E2 ubiquitin-conjugating enzyme]-L-cysteine.. The catalysed reaction is S-ubiquitinyl-[E1 ubiquitin-activating enzyme]-L-cysteine + [acceptor protein]-L-lysine = [E1 ubiquitin-activating enzyme]-L-cysteine + N(6)-monoubiquitinyl-[acceptor protein]-L-lysine.. The protein operates within protein modification; protein ubiquitination. Accepts ubiquitin from the E1 complex and catalyzes its covalent attachment to other proteins. In vitro catalyzes 'Lys-11'- and 'Lys-48'-linked polyubiquitination. Acts as an essential factor of the anaphase promoting complex/cyclosome (APC/C), a cell cycle-regulated ubiquitin ligase that controls progression through mitosis. Acts by initiating 'Lys-11'-linked polyubiquitin chains on APC/C substrates, leading to the degradation of APC/C substrates by the proteasome and promoting mitotic exit. The sequence is that of Ubiquitin-conjugating enzyme E2 C (Ube2c) from Mus musculus (Mouse).